Reading from the N-terminus, the 1033-residue chain is uncharacterized protein (1033 aa).

4 coiled-coil regions span residues 212-326 (EIFK…KMNN), 405-582 (ILNN…LYKF), 615-771 (LEKE…LKLN), and 797-1019 (KMKI…NIDN).

This is an uncharacterized protein from Plasmodium falciparum (isolate 3D7).